Reading from the N-terminus, the 258-residue chain is Imidazole glycerol phosphate synthase subunit HisF (258 aa).

Active-site residues include aspartate 12 and aspartate 131.

Belongs to the HisA/HisF family. As to quaternary structure, heterodimer of HisH and HisF.

Its subcellular location is the cytoplasm. It catalyses the reaction 5-[(5-phospho-1-deoxy-D-ribulos-1-ylimino)methylamino]-1-(5-phospho-beta-D-ribosyl)imidazole-4-carboxamide + L-glutamine = D-erythro-1-(imidazol-4-yl)glycerol 3-phosphate + 5-amino-1-(5-phospho-beta-D-ribosyl)imidazole-4-carboxamide + L-glutamate + H(+). The protein operates within amino-acid biosynthesis; L-histidine biosynthesis; L-histidine from 5-phospho-alpha-D-ribose 1-diphosphate: step 5/9. IGPS catalyzes the conversion of PRFAR and glutamine to IGP, AICAR and glutamate. The HisF subunit catalyzes the cyclization activity that produces IGP and AICAR from PRFAR using the ammonia provided by the HisH subunit. In Pseudarthrobacter chlorophenolicus (strain ATCC 700700 / DSM 12829 / CIP 107037 / JCM 12360 / KCTC 9906 / NCIMB 13794 / A6) (Arthrobacter chlorophenolicus), this protein is Imidazole glycerol phosphate synthase subunit HisF.